Here is a 119-residue protein sequence, read N- to C-terminus: Fluoride-specific ion channel FluC 1 (119 aa).

4 helical membrane-spanning segments follow: residues 6–26 (VALVAGGGFAGALCRHGIAVV), 31–51 (FPWGTLVVNVAGAFLLGAIVY), 66–86 (VVATGFLSSFTTYSTFAGETI), and 91–111 (RLAALNVVGNYALGFVAVLVA).

Belongs to the fluoride channel Fluc/FEX (TC 1.A.43) family.

It localises to the cell membrane. The enzyme catalyses fluoride(in) = fluoride(out). In terms of biological role, fluoride-specific ion channel. Important for reducing fluoride concentration in the cell, thus reducing its toxicity. This is Fluoride-specific ion channel FluC 1 from Natronomonas pharaonis (strain ATCC 35678 / DSM 2160 / CIP 103997 / JCM 8858 / NBRC 14720 / NCIMB 2260 / Gabara) (Halobacterium pharaonis).